An 85-amino-acid chain; its full sequence is Neurotoxin 60.35 (85 aa).

The first 23 residues, 1–23 (MKFCVAVSLLIIASMAGVISVSG), serve as a signal peptide directing secretion. The LCN-type CS-alpha/beta domain occupies 24–85 (YDVYPRDYAG…NFLSVIWKQC (62 aa)). 3 cysteine pairs are disulfide-bonded: Cys38–Cys60, Cys46–Cys65, and Cys50–Cys67.

It belongs to the long (3 C-C) scorpion toxin superfamily. In terms of tissue distribution, expressed by the venom gland.

The protein resides in the secreted. This chain is Neurotoxin 60.35, found in Lychas mucronatus (Chinese swimming scorpion).